We begin with the raw amino-acid sequence, 252 residues long: Large ribosomal subunit protein uL4 (252 aa).

The protein belongs to the universal ribosomal protein uL4 family. Part of the 50S ribosomal subunit.

Functionally, one of the primary rRNA binding proteins, this protein initially binds near the 5'-end of the 23S rRNA. It is important during the early stages of 50S assembly. It makes multiple contacts with different domains of the 23S rRNA in the assembled 50S subunit and ribosome. Its function is as follows. Forms part of the polypeptide exit tunnel. The protein is Large ribosomal subunit protein uL4 of Methanococcus maripaludis (strain DSM 14266 / JCM 13030 / NBRC 101832 / S2 / LL).